The following is a 152-amino-acid chain: Isoquinoline 1-oxidoreductase subunit alpha (152 aa).

Residues 1 to 77 (MIEFILNGQP…RQSVTTIEGL (77 aa)) form the 2Fe-2S ferredoxin-type domain. Residues Cys39, Cys44, and Cys47 each coordinate [2Fe-2S] cluster.

Heterodimer of an alpha chain and a beta chain.

It carries out the reaction isoquinoline + A + H2O = isoquinolin-1(2H)-one + AH2. In terms of biological role, specific towards N-containing N-heterocyclic substrates, including isoquinoline, isoquinolin-5-ol, phthalazine and quinazoline. In Brevundimonas diminuta (Pseudomonas diminuta), this protein is Isoquinoline 1-oxidoreductase subunit alpha (iorA).